The following is a 102-amino-acid chain: ATP-dependent Clp protease adapter protein ClpS (102 aa).

It belongs to the ClpS family. In terms of assembly, binds to the N-terminal domain of the chaperone ClpA.

Involved in the modulation of the specificity of the ClpAP-mediated ATP-dependent protein degradation. The protein is ATP-dependent Clp protease adapter protein ClpS of Shewanella piezotolerans (strain WP3 / JCM 13877).